We begin with the raw amino-acid sequence, 284 residues long: Tropomyosin (284 aa).

The disordered stretch occupies residues 1–39 (MDAIKKKMQAMKLEKDNAMDRADTLEQQNKEANIRAEKT). A coiled-coil region spans residues 1–284 (MDAIKKKMQA…DQTFSELSGY (284 aa)). The span at 12–39 (KLEKDNAMDRADTLEQQNKEANIRAEKT) shows a compositional bias: basic and acidic residues.

It belongs to the tropomyosin family. Homodimer.

Functionally, tropomyosin, in association with the troponin complex, plays a central role in the calcium dependent regulation of muscle contraction. This is Tropomyosin (TM1) from Homarus americanus (American lobster).